The following is a 266-amino-acid chain: Probable carboxylesterase Os04g0669500 (266 aa).

Catalysis depends on charge relay system residues Ser-154, Asp-208, and His-240.

It belongs to the AB hydrolase superfamily. AB hydrolase 2 family.

In terms of biological role, possesses carboxylesterase activity in vitro. The protein is Probable carboxylesterase Os04g0669500 of Oryza sativa subsp. japonica (Rice).